We begin with the raw amino-acid sequence, 903 residues long: DNA mismatch repair protein MutS (903 aa).

Position 655–662 (655–662) interacts with ATP; the sequence is GPNMAGKS.

The protein belongs to the DNA mismatch repair MutS family.

In terms of biological role, this protein is involved in the repair of mismatches in DNA. It is possible that it carries out the mismatch recognition step. This protein has a weak ATPase activity. The protein is DNA mismatch repair protein MutS of Caulobacter vibrioides (strain ATCC 19089 / CIP 103742 / CB 15) (Caulobacter crescentus).